We begin with the raw amino-acid sequence, 628 residues long: MGKEMKQTAFEKSIDSASQIMLQKAEDEGIETAWDRYEQQLPQCSFGQLGICCRNCNMGPCRIDPFGEGTEKGICGATADIIVARNLLRMIAAGAAAHSDHARDAVLTFKKMSEGKAGSYRIKDEAKLYSLASEYGISAEEKSREEVAVELASALLSEFGKQEGPILCTKRAPESRLKLWSELGIEPRGIDREIVECMHRTHIGVDNDATHILLHGLRTSLSDGWGGSMIATEIQDVLFGTPEPKKSTVNLGVLSHDKVNVIVHGHEPILSEMIVEAAEDPELLELAEEKGATGINVAGICCTGNETLMRHGTPIAGTFLQQELAVITGAVEAMVVDVQCIMPSLGNLTGCYHTKFISTSPKADFPGTARMEFHEEEAYATAKEIVKAAVENFPNRNLKKVSIPEEKQECMVGFSAEAILKALGGSPAPLIEAIAGGAIKGIGAVVGCNNVKIQHNYGHVNLVKELIKNNVLVVTTGCNAIACAEAGLLVPEAAALAGDGLKGVCEALGIPPVLHMGSCVDISRILVLASAVANSLGVDISDLPAAGAAPEWMSEKAVSIGAYVVSSGVFTVLGTIPPVLGSQAVTALLTKGLDGVIGASFAVEPDPFKAADLMLEHIEGKRKALGLK.

The [4Fe-4S] cluster site is built by cysteine 44, cysteine 52, cysteine 53, cysteine 56, cysteine 61, and cysteine 75. 6 residues coordinate [Ni-4Fe-5S] cluster: histidine 266, cysteine 302, cysteine 340, cysteine 448, cysteine 478, and cysteine 519.

This sequence belongs to the Ni-containing carbon monoxide dehydrogenase family. Homodimer. [4Fe-4S] cluster is required as a cofactor. [Ni-4Fe-5S] cluster serves as cofactor.

The catalysed reaction is CO + 2 oxidized [2Fe-2S]-[ferredoxin] + H2O = 2 reduced [2Fe-2S]-[ferredoxin] + CO2 + 2 H(+). CODH oxidizes carbon monoxide coupled, via CooF, to the reduction of a hydrogen cation by a hydrogenase (possibly CooH). In Methanosarcina acetivorans (strain ATCC 35395 / DSM 2834 / JCM 12185 / C2A), this protein is Carbon monoxide dehydrogenase 1 (cooS1).